The following is a 614-amino-acid chain: UvrABC system protein C (614 aa).

The GIY-YIG domain maps to 14–91 (TSPGCYIHKD…IKENKPKYNI (78 aa)). The UVR domain occupies 196-231 (NKIIDELKGKMAAAAQTMEFERAAEYRDLIQAIGTL). The interval 595–614 (LPQVAEERVDYQTEGNHNKP) is disordered.

The protein belongs to the UvrC family. As to quaternary structure, interacts with UvrB in an incision complex.

Its subcellular location is the cytoplasm. Functionally, the UvrABC repair system catalyzes the recognition and processing of DNA lesions. UvrC both incises the 5' and 3' sides of the lesion. The N-terminal half is responsible for the 3' incision and the C-terminal half is responsible for the 5' incision. The chain is UvrABC system protein C from Streptococcus pneumoniae (strain Taiwan19F-14).